The chain runs to 226 residues: Ribose-5-phosphate isomerase A (226 aa).

Residues 26–29, 82–85, and 95–98 contribute to the substrate site; these read TGST, DGAD, and KGGG. Glu104 functions as the Proton acceptor in the catalytic mechanism. Position 122 (Lys122) interacts with substrate.

This sequence belongs to the ribose 5-phosphate isomerase family. Homodimer.

It catalyses the reaction aldehydo-D-ribose 5-phosphate = D-ribulose 5-phosphate. Its pathway is carbohydrate degradation; pentose phosphate pathway; D-ribose 5-phosphate from D-ribulose 5-phosphate (non-oxidative stage): step 1/1. Its function is as follows. Catalyzes the reversible conversion of ribose-5-phosphate to ribulose 5-phosphate. The sequence is that of Ribose-5-phosphate isomerase A from Streptococcus uberis (strain ATCC BAA-854 / 0140J).